The chain runs to 101 residues: Phosphoribosyl-AMP cyclohydrolase (101 aa).

Aspartate 71 is a Mg(2+) binding site. Cysteine 72 provides a ligand contact to Zn(2+). Residues aspartate 73 and aspartate 75 each contribute to the Mg(2+) site. Residues cysteine 88 and cysteine 95 each contribute to the Zn(2+) site.

Belongs to the PRA-CH family. In terms of assembly, homodimer. Requires Mg(2+) as cofactor. The cofactor is Zn(2+).

Its subcellular location is the cytoplasm. The catalysed reaction is 1-(5-phospho-beta-D-ribosyl)-5'-AMP + H2O = 1-(5-phospho-beta-D-ribosyl)-5-[(5-phospho-beta-D-ribosylamino)methylideneamino]imidazole-4-carboxamide. It participates in amino-acid biosynthesis; L-histidine biosynthesis; L-histidine from 5-phospho-alpha-D-ribose 1-diphosphate: step 3/9. Its function is as follows. Catalyzes the hydrolysis of the adenine ring of phosphoribosyl-AMP. This is Phosphoribosyl-AMP cyclohydrolase from Bacillus cereus (strain B4264).